Consider the following 575-residue polypeptide: 5-aminolevulinate synthase, mitochondrial (575 aa).

Residues Met1–Tyr55 constitute a mitochondrion transit peptide. The substrate site is built by Arg124, Ser237, and Lys256. 3 residues coordinate pyridoxal 5'-phosphate: Ser289, His317, and Thr361. Lys364 is a catalytic residue. Lys364 carries the N6-(pyridoxal phosphate)lysine modification. Pyridoxal 5'-phosphate-binding residues include Thr393 and Thr394. Residue Thr479 participates in substrate binding.

The protein belongs to the class-II pyridoxal-phosphate-dependent aminotransferase family. Homodimer. It depends on pyridoxal 5'-phosphate as a cofactor.

Its subcellular location is the mitochondrion matrix. The catalysed reaction is succinyl-CoA + glycine + H(+) = 5-aminolevulinate + CO2 + CoA. Its pathway is porphyrin-containing compound metabolism; protoporphyrin-IX biosynthesis; 5-aminolevulinate from glycine: step 1/1. Its function is as follows. Catalyzes the synthesis of 5-aminolevulinate (ALA) from succinyl-CoA and glycine, the first and rate-limiting step in heme biosynthesis. This chain is 5-aminolevulinate synthase, mitochondrial (HEM1), found in Debaryomyces hansenii (strain ATCC 36239 / CBS 767 / BCRC 21394 / JCM 1990 / NBRC 0083 / IGC 2968) (Yeast).